The following is a 1012-amino-acid chain: Ubiquitin-activating enzyme E1 1 (1012 aa).

Arg22 provides a ligand contact to ATP. Position 264 is a phosphoserine (Ser264). 2 residues coordinate ATP: Ala437 and Asp463. Residues Asp465 and Glu468 each coordinate Mg(2+). Residues Asn471, Arg474, Lys487, Val513, Asp537, and Asn538 each contribute to the ATP site. Asp537 is a binding site for Mg(2+). Lys588 participates in a covalent cross-link: Glycyl lysine isopeptide (Lys-Gly) (interchain with G-Cter in ubiquitin). Cys593 acts as the Glycyl thioester intermediate in catalysis. Residue Ser903 is modified to Phosphoserine.

Belongs to the ubiquitin-activating E1 family. In terms of assembly, monomer. Interacts with the E2 ubiquitin-conjugating enzyme ubc4.

The protein resides in the cytoplasm. The protein localises to the nucleus. The enzyme catalyses ATP + ubiquitin + [E1 ubiquitin-activating enzyme]-L-cysteine = AMP + diphosphate + S-ubiquitinyl-[E1 ubiquitin-activating enzyme]-L-cysteine.. The protein operates within protein modification; protein ubiquitination. Ubiquitin transfer between the E1 ubiquitin-activating enzyme ptr3 and E2 ubiquitin-conjugating enzyme ubc4 is enhanced by the presence of magnesium and ATP, or adenylated ubiquitin. Functionally, E1 ubiquitin-activating enzyme that catalyzes the first step in ubiquitin conjugation to mark cellular proteins for degradation through the ubiquitin-proteasome system. Activates ubiquitin by first adenylating its C-terminal glycine residue with ATP, and thereafter linking this residue to the side chain of a cysteine residue in E1, yielding a ubiquitin-E1 thioester and free AMP. In Schizosaccharomyces pombe (strain 972 / ATCC 24843) (Fission yeast), this protein is Ubiquitin-activating enzyme E1 1 (ptr3).